The sequence spans 592 residues: Aspartate--tRNA ligase (592 aa).

Position 171 (Glu171) interacts with L-aspartate. The tract at residues 195 to 198 (QLFK) is aspartate. Residue Arg217 participates in L-aspartate binding. ATP is bound by residues 217-219 (RDE) and Gln226. His448 contacts L-aspartate. Glu482 provides a ligand contact to ATP. Arg489 serves as a coordination point for L-aspartate. 534 to 537 (GLDR) is a binding site for ATP.

This sequence belongs to the class-II aminoacyl-tRNA synthetase family. Type 1 subfamily. In terms of assembly, homodimer.

It is found in the cytoplasm. It catalyses the reaction tRNA(Asp) + L-aspartate + ATP = L-aspartyl-tRNA(Asp) + AMP + diphosphate. Its function is as follows. Catalyzes the attachment of L-aspartate to tRNA(Asp) in a two-step reaction: L-aspartate is first activated by ATP to form Asp-AMP and then transferred to the acceptor end of tRNA(Asp). The sequence is that of Aspartate--tRNA ligase from Vibrio parahaemolyticus serotype O3:K6 (strain RIMD 2210633).